Consider the following 408-residue polypeptide: MINALKGMKDLLDKDAYYYEKVIKICEEVAKNYGFTFINTPHLELCTLFKRSVGESSDIVGKEMYEFIDKGENHVCMRPEGTAGVVRAYIEKKLDKNTSVKRWFYYGSMFRYERPQKGRLREFHQFGVESLGIPNVYEDASIILMLVEIFSRLGIDFKLQLNSLGCSQCLPKYRDRLVEFLDSKEGFCEDCLRRKNLNPIRVLDCKNEHCQNLLENAPLLINNLCTSCQKDFETLQQILKDNGVKFELDSKLVRGLDYYSKTAFEFISDEIGAKAAIAGGGRYDRLIEYLGGKSGYGIGFAMGIERIITILEQKEEKIQREGIYLCAMDEIYIQKLLHIATNLRKEYKVLLSYEARKLAKHLENADKNNTEIFLCMGENEAQNESLFYKNLAKKEEKMIKISDLKKVL.

It belongs to the class-II aminoacyl-tRNA synthetase family. In terms of assembly, homodimer.

The protein localises to the cytoplasm. It catalyses the reaction tRNA(His) + L-histidine + ATP = L-histidyl-tRNA(His) + AMP + diphosphate + H(+). The polypeptide is Histidine--tRNA ligase (Campylobacter jejuni subsp. jejuni serotype O:2 (strain ATCC 700819 / NCTC 11168)).